Consider the following 295-residue polypeptide: MNAILPKISTLPAKPAPTREWLAGIDLLLAKRYQRTALMSSKHFGPLRVQRPFYPEPDGCCHIYLLHPPGGLVIGDNLHIGASLQQGAQALITTPSAGKLYGAKGASEKQGQQVEFNLAAESCLEWLPQETIIFDGANGTLSTKVNLTGNAQYFGWDIIRLGRVASGEPFNTGTCAQRLQLWRDGLPLFIEKTKFEASSNMHREKWGLQNANTCATLTATLQLTRDSIDEMLEALAQLGVTNTGEWGLTQKESLFIVRYLGNSITDCRKGFEFIWQQTRAVFNGKPAEVPRIWRT.

Belongs to the UreD family. In terms of assembly, ureD, UreF and UreG form a complex that acts as a GTP-hydrolysis-dependent molecular chaperone, activating the urease apoprotein by helping to assemble the nickel containing metallocenter of UreC. The UreE protein probably delivers the nickel.

Its subcellular location is the cytoplasm. Required for maturation of urease via the functional incorporation of the urease nickel metallocenter. In Saccharophagus degradans (strain 2-40 / ATCC 43961 / DSM 17024), this protein is Urease accessory protein UreD.